The primary structure comprises 382 residues: Histidinol-phosphate aminotransferase (382 aa).

Positions 1-28 are disordered; sequence MTSAPRPRPTLDDLPLREDLRGKSPYGA. Over residues 9-22 the composition is skewed to basic and acidic residues; the sequence is PTLDDLPLREDLRG. Lysine 233 is subject to N6-(pyridoxal phosphate)lysine.

It belongs to the class-II pyridoxal-phosphate-dependent aminotransferase family. Histidinol-phosphate aminotransferase subfamily. In terms of assembly, homodimer. Requires pyridoxal 5'-phosphate as cofactor.

It catalyses the reaction L-histidinol phosphate + 2-oxoglutarate = 3-(imidazol-4-yl)-2-oxopropyl phosphate + L-glutamate. The protein operates within amino-acid biosynthesis; L-histidine biosynthesis; L-histidine from 5-phospho-alpha-D-ribose 1-diphosphate: step 7/9. The chain is Histidinol-phosphate aminotransferase from Mycobacterium marinum (strain ATCC BAA-535 / M).